The primary structure comprises 256 residues: Protein LIKE COV 1 (256 aa).

Basic and acidic residues predominate over residues 1-10 (MANRERDREL). The interval 1–39 (MANRERDRELLIPVADFGDKDDGSSSKPSSSSSASSSHQ) is disordered. The Cytoplasmic portion of the chain corresponds to 1–60 (MANRERDRELLIPVADFGDKDDGSSSKPSSSSSASSSHQSGHETLSLFIRGWASKKFMTG). Residues 25 to 39 (SSKPSSSSSASSSHQ) show a composition bias toward low complexity. The chain crosses the membrane as a helical span at residues 61-81 (CVILLPIAVTFYTTWWFIHFV). At 82–93 (DGFFSPIYALLG) the chain is on the extracellular side. The chain crosses the membrane as a helical span at residues 94–114 (INIFGFGFLTSIAFIFLVGVF). Over 115–256 (MSSWLGASVL…KPLASIGNES (142 aa)) the chain is Cytoplasmic.

Belongs to the plant COV1 protein family. In terms of tissue distribution, expressed at low levels in flowers, stems, roots and leaves.

It is found in the membrane. This chain is Protein LIKE COV 1, found in Arabidopsis thaliana (Mouse-ear cress).